The chain runs to 657 residues: LIM and SH3 domain protein Lasp (657 aa).

Residues Lys3–Thr63 enclose the LIM zinc-binding domain. Nebulin repeat units lie at residues Ala64 to Gly95 and Lys96 to Ala130. Disordered stretches follow at residues Ala130–Ser151, Pro164–His223, Tyr235–Asp257, Leu294–Ala318, Asn332–Ser415, and Lys460–Ile528. Over residues Val140–Phe150 the composition is skewed to polar residues. Composition is skewed to low complexity over residues Ala172 to Thr215 and Gln236 to Gln254. The span at Asn332–Val341 shows a compositional bias: polar residues. Low complexity predominate over residues Asp342–Gln357. Over residues Ser358–Gln370 the composition is skewed to polar residues. A compositionally biased stretch (low complexity) spans Ser371–Gln403. The span at Lys460–His475 shows a compositional bias: polar residues. Phosphoserine is present on residues Ser505 and Ser530. The segment at Glu548–Ser592 is disordered. A compositionally biased stretch (low complexity) spans Gln549–Ser586. In terms of domain architecture, SH3 spans Thr596–Ile657.

As to quaternary structure, interacts with osk.

This is LIM and SH3 domain protein Lasp from Drosophila melanogaster (Fruit fly).